The sequence spans 196 residues: ATP synthase subunit b 2 (196 aa).

A compositionally biased stretch (low complexity) spans 1–18 (MVVAQAGAPAHPPAAHGA). The tract at residues 1-33 (MVVAQAGAPAHPPAAHGAEAGHGEAAGGEHGGF) is disordered. A helical transmembrane segment spans residues 41–60 (FASQLIWLIVSFGALYFLMS).

The protein belongs to the ATPase B chain family. In terms of assembly, F-type ATPases have 2 components, F(1) - the catalytic core - and F(0) - the membrane proton channel. F(1) has five subunits: alpha(3), beta(3), gamma(1), delta(1), epsilon(1). F(0) has three main subunits: a(1), b(2) and c(10-14). The alpha and beta chains form an alternating ring which encloses part of the gamma chain. F(1) is attached to F(0) by a central stalk formed by the gamma and epsilon chains, while a peripheral stalk is formed by the delta and b chains.

The protein resides in the cell inner membrane. In terms of biological role, f(1)F(0) ATP synthase produces ATP from ADP in the presence of a proton or sodium gradient. F-type ATPases consist of two structural domains, F(1) containing the extramembraneous catalytic core and F(0) containing the membrane proton channel, linked together by a central stalk and a peripheral stalk. During catalysis, ATP synthesis in the catalytic domain of F(1) is coupled via a rotary mechanism of the central stalk subunits to proton translocation. Component of the F(0) channel, it forms part of the peripheral stalk, linking F(1) to F(0). The b'-subunit is a diverged and duplicated form of b found in plants and photosynthetic bacteria. The protein is ATP synthase subunit b 2 (atpF2) of Azorhizobium caulinodans (strain ATCC 43989 / DSM 5975 / JCM 20966 / LMG 6465 / NBRC 14845 / NCIMB 13405 / ORS 571).